Reading from the N-terminus, the 195-residue chain is Shikimate kinase (195 aa).

30–35 (GAGKTA) contacts ATP. T34 is a binding site for Mg(2+). Residues D52, R76, and G98 each coordinate substrate. R136 lines the ATP pocket. R155 is a binding site for substrate.

It belongs to the shikimate kinase family. In terms of assembly, monomer. The cofactor is Mg(2+).

The protein resides in the cytoplasm. It catalyses the reaction shikimate + ATP = 3-phosphoshikimate + ADP + H(+). It participates in metabolic intermediate biosynthesis; chorismate biosynthesis; chorismate from D-erythrose 4-phosphate and phosphoenolpyruvate: step 5/7. Functionally, catalyzes the specific phosphorylation of the 3-hydroxyl group of shikimic acid using ATP as a cosubstrate. The sequence is that of Shikimate kinase from Ruegeria pomeroyi (strain ATCC 700808 / DSM 15171 / DSS-3) (Silicibacter pomeroyi).